Here is a 107-residue protein sequence, read N- to C-terminus: Lipid-anchored protein YDL012C (107 aa).

A compositionally biased stretch (polar residues) spans 1–18 (MSAQDYYGNSASKQSYSR). A disordered region spans residues 1-86 (MSAQDYYGNS…VQQQPASSGN (86 aa)). An N-acetylserine modification is found at serine 2. Lysine 13 is covalently cross-linked (Glycyl lysine isopeptide (Lys-Gly) (interchain with G-Cter in ubiquitin)). Low complexity predominate over residues 35–81 (PSQSQQNYYPPQQQQQQYQQQPQYYQQQQPQYYQQHPQQPIYVQQQP).

The protein belongs to the CYSTM1 family.

It is found in the cell membrane. This chain is Lipid-anchored protein YDL012C, found in Saccharomyces cerevisiae (strain ATCC 204508 / S288c) (Baker's yeast).